The chain runs to 479 residues: Transcription factor CP2-like protein 1 (479 aa).

The segment at 1–52 (MLFWHTQPEHYNQHNSGSYLRDVLALPIFKQEEPQLSPENGARLPPLQYVLC) is mediate transcriptional repression. Residues 43–280 (RLPPLQYVLC…PSPSYNGSPN (238 aa)) enclose the Grh/CP2 DB domain. 2 disordered regions span residues 219–248 (KPKG…YQPS) and 260–301 (WPDV…LPLG). Basic and acidic residues predominate over residues 221–245 (KGADRKQKTDREKMEKRTAQEKEKY). The segment at 261 to 365 (PDVPYQANNT…IRLFNAIKGR (105 aa)) is SAM2-like domain. The segment covering 266 to 292 (QANNTPSPSYNGSPNSFGLREGNSSPN) has biased composition (polar residues).

The protein belongs to the grh/CP2 family. CP2 subfamily. In terms of assembly, forms homohexamers via its SAM-like domain. Interacts with Mta1; which is indispensable for Tfcp2l1-mediated self-renewal-promoting effect and endoderm-inhibiting action. Highly expressed in placenta, testis, small intestine, kidney and stomach. Low levels of expression in lung, mesenteric lymph nodes, muscle, ovary, and thymus. No expression was detected in brain, heart, liver, and spleen. Expressed in eccrine glands in the palm. Expression is prominent in both kidney collecting ducts intercalated (IC) and principal (PC) cells. Also expressed in the thick limb of Henle and connecting segments of the nephron.

It is found in the nucleus. Transcription factor that facilitates establishment and maintenance of pluripotency in embryonic stem cells (ESCs). With Klf2, acts as the major effector of self-renewal that mediates induction of pluripotency downstream of LIF/Stat3 and Wnt/beta-catenin signaling. Required for normal duct development in the salivary gland and kidney. Coordinates the development of the kidney collecting ducts intercalated (IC) and principal (PC) cells, which regulate acid-base and salt-water homeostasis, respectively. Regulates the expression of IC genes including subunits B1 and D2 of the V-ATPase complex, Oxgr1, Ca12, Slc4a1, Aqp6 and IC-specific transcription factor Foxi1. Also regulates the expression of Jag1 and subsequent notch signaling in the collecting duct. Jag1 initiates notch signaling in PCs but inhibits notch signaling in ICs. Acts as a transcriptional suppressor that may suppress UBP1-mediated transcriptional activation. Modulates the placental expression of CYP11A1. The protein is Transcription factor CP2-like protein 1 (Tfcp2l1) of Mus musculus (Mouse).